The primary structure comprises 209 residues: 8-oxoguanine DNA glycosylase/AP lyase (209 aa).

Active-site residues include Lys-131 and Asp-149.

This sequence belongs to the type-2 OGG1 family.

It carries out the reaction 2'-deoxyribonucleotide-(2'-deoxyribose 5'-phosphate)-2'-deoxyribonucleotide-DNA = a 3'-end 2'-deoxyribonucleotide-(2,3-dehydro-2,3-deoxyribose 5'-phosphate)-DNA + a 5'-end 5'-phospho-2'-deoxyribonucleoside-DNA + H(+). In terms of biological role, catalyzes the excision of an oxidatively damaged form of guanine (7,8-dihydro-8-oxoguanine = 8-oxoG) from DNA. Also cleaves the DNA backbone at apurinic/apyrimidinic sites (AP sites). The polypeptide is 8-oxoguanine DNA glycosylase/AP lyase (Korarchaeum cryptofilum (strain OPF8)).